We begin with the raw amino-acid sequence, 546 residues long: Chaperonin GroEL (546 aa).

Residues 29–32, Lys-50, 86–90, Gly-414, 477–479, and Asp-493 each bind ATP; these read TLGP, DGTTT, and NAL. The tract at residues 522–546 is disordered; sequence KPEKDAPNPMAGMGGGGMGGMGGMM. Residues 533-546 are compositionally biased toward gly residues; the sequence is GMGGGGMGGMGGMM.

The protein belongs to the chaperonin (HSP60) family. In terms of assembly, forms a cylinder of 14 subunits composed of two heptameric rings stacked back-to-back. Interacts with the co-chaperonin GroES.

The protein resides in the cytoplasm. It catalyses the reaction ATP + H2O + a folded polypeptide = ADP + phosphate + an unfolded polypeptide.. Functionally, together with its co-chaperonin GroES, plays an essential role in assisting protein folding. The GroEL-GroES system forms a nano-cage that allows encapsulation of the non-native substrate proteins and provides a physical environment optimized to promote and accelerate protein folding. This chain is Chaperonin GroEL, found in Leptospira borgpetersenii serovar Hardjo-bovis (strain JB197).